Here is a 226-residue protein sequence, read N- to C-terminus: Thiamine-phosphate synthase (226 aa).

Residues 46 to 50 (QLRDK) and Asn-87 each bind 4-amino-2-methyl-5-(diphosphooxymethyl)pyrimidine. The Mg(2+) site is built by Asp-88 and Asp-107. Ser-126 is a binding site for 4-amino-2-methyl-5-(diphosphooxymethyl)pyrimidine. Residue 152–154 (TPT) participates in 2-[(2R,5Z)-2-carboxy-4-methylthiazol-5(2H)-ylidene]ethyl phosphate binding. Lys-155 is a binding site for 4-amino-2-methyl-5-(diphosphooxymethyl)pyrimidine. A 2-[(2R,5Z)-2-carboxy-4-methylthiazol-5(2H)-ylidene]ethyl phosphate-binding site is contributed by Gly-183.

Belongs to the thiamine-phosphate synthase family. The cofactor is Mg(2+).

The catalysed reaction is 2-[(2R,5Z)-2-carboxy-4-methylthiazol-5(2H)-ylidene]ethyl phosphate + 4-amino-2-methyl-5-(diphosphooxymethyl)pyrimidine + 2 H(+) = thiamine phosphate + CO2 + diphosphate. It carries out the reaction 2-(2-carboxy-4-methylthiazol-5-yl)ethyl phosphate + 4-amino-2-methyl-5-(diphosphooxymethyl)pyrimidine + 2 H(+) = thiamine phosphate + CO2 + diphosphate. It catalyses the reaction 4-methyl-5-(2-phosphooxyethyl)-thiazole + 4-amino-2-methyl-5-(diphosphooxymethyl)pyrimidine + H(+) = thiamine phosphate + diphosphate. The protein operates within cofactor biosynthesis; thiamine diphosphate biosynthesis; thiamine phosphate from 4-amino-2-methyl-5-diphosphomethylpyrimidine and 4-methyl-5-(2-phosphoethyl)-thiazole: step 1/1. Functionally, condenses 4-methyl-5-(beta-hydroxyethyl)thiazole monophosphate (THZ-P) and 2-methyl-4-amino-5-hydroxymethyl pyrimidine pyrophosphate (HMP-PP) to form thiamine monophosphate (TMP). The protein is Thiamine-phosphate synthase of Mycobacterium sp. (strain JLS).